A 1106-amino-acid polypeptide reads, in one-letter code: Solute carrier family 12 member 7 (1106 aa).

Residues 1–143 (MVYTALTWQR…PRESKAPCMG (143 aa)) lie on the Cytoplasmic side of the membrane. The segment at 17-83 (GLVPSHLPQE…SPFIGSAAAD (67 aa)) is disordered. Phosphoserine occurs at positions 74 and 86. The discontinuously helical transmembrane segment at 144–166 (TFIGVYLPCLQNILGVILFLRLT) threads the bilayer. N155 and I156 together coordinate K(+). V159 provides a ligand contact to chloride. Residues 167–173 (WIVGAAG) lie on the Extracellular side of the membrane. A helical membrane pass occupies residues 174 to 196 (VLESFLVVSMCCTCTMLTAVSMS). Residues 197–220 (AIATNGVVPAGGSYYMISRSLGPE) lie on the Cytoplasmic side of the membrane. A helical membrane pass occupies residues 221–249 (FGGAVGLCFYLGTTFAGAMYILGTIEIFL). The Extracellular portion of the chain corresponds to 250–273 (TYISPGAAVFQAETPEGEAAALLH). 2 helical membrane-spanning segments follow: residues 274-295 (NMRV…VGVK) and 296-324 (YVNK…KTAF). At 325–443 (DPPDIPVCLL…PYVLSDITTY (119 aa)) the chain is on the extracellular side. N-linked (GlcNAc...) asparagine glycosylation is found at N336, N355, and N384. Residues 444 to 464 (FTVLVGIYFPSVTGIMAGSNR) form a helical membrane-spanning segment. The K(+) site is built by P453 and T456. Residue P453 coordinates chloride. The chloride site is built by G457 and I458. Residues 465 to 474 (SGDLKDAQKS) lie on the Cytoplasmic side of the membrane. A helical membrane pass occupies residues 475-497 (IPTGTILAIVTTSFIYLSCIVLF). Over 498-528 (GACIEGVVLRDKFGEALQGNLVIGMLAWPSP) the chain is Extracellular. Residues 529-555 (WVIVIGSFFSTCGAGLQSLTGAPRLLQ) form a helical membrane-spanning segment. Residues 556 to 578 (AIARDGIVPFLQVFGHGKANGEP) lie on the Cytoplasmic side of the membrane. A run of 2 helical transmembrane segments spans residues 579–597 (TWAL…LIAS) and 598–622 (LDSV…ACAV). Y613 contributes to the chloride binding site. Topologically, residues 623–636 (QTLLRTPNWRPRFK) are cytoplasmic. 2 helical membrane passes run 637 to 659 (YYHW…ICSW) and 660 to 675 (YYAL…IYKY). The Cytoplasmic portion of the chain corresponds to 676 to 1106 (IEYRGAEKEW…GGREVITIYS (431 aa)). A scissor helix region spans residues 688 to 704 (GIRGLSLNAARYALLRV). Residues 980 to 999 (RNTASHTAASRAQAPPTPDK) are disordered. 2 positions are modified to phosphothreonine: T996 and T1003.

Belongs to the SLC12A transporter family. K/Cl co-transporter subfamily. In terms of assembly, homodimer; adopts a domain-swap conformation at the scissor helices connecting the transmembrane domain and C-terminal domain. Heterodimer with K-Cl cotransporter SLC12A5. In terms of tissue distribution, widely expressed. Higher levels in heart, kidney and lung (at protein level).

It is found in the cell membrane. It carries out the reaction K(+)(in) + chloride(in) = K(+)(out) + chloride(out). With respect to regulation, activated by N-ethylmaleimide (NEM). Inhibited by furosemide, DIDS and bumetanide. The inhibition is much stronger in the presence of 50 mM K(+) in the uptake medium. Inhibited by DIOA. Inhibited by WNK3. In terms of biological role, mediates electroneutral potassium-chloride cotransport when activated by cell swelling. May mediate K(+) uptake into Deiters' cells in the cochlea and contribute to K(+) recycling in the inner ear. Important for the survival of cochlear outer and inner hair cells and the maintenance of the organ of Corti. May be required for basolateral Cl(-) extrusion in the kidney and contribute to renal acidification. The sequence is that of Solute carrier family 12 member 7 from Oryctolagus cuniculus (Rabbit).